A 181-amino-acid polypeptide reads, in one-letter code: uncharacterized protein (181 aa).

This is an uncharacterized protein from Acheta domesticus (House cricket).